The chain runs to 481 residues: Proline--tRNA ligase (481 aa).

The protein belongs to the class-II aminoacyl-tRNA synthetase family. ProS type 3 subfamily. As to quaternary structure, homodimer.

The protein resides in the cytoplasm. The enzyme catalyses tRNA(Pro) + L-proline + ATP = L-prolyl-tRNA(Pro) + AMP + diphosphate. Functionally, catalyzes the attachment of proline to tRNA(Pro) in a two-step reaction: proline is first activated by ATP to form Pro-AMP and then transferred to the acceptor end of tRNA(Pro). The protein is Proline--tRNA ligase of Chlorobaculum tepidum (strain ATCC 49652 / DSM 12025 / NBRC 103806 / TLS) (Chlorobium tepidum).